A 1077-amino-acid polypeptide reads, in one-letter code: Zinc finger protein 518B (1077 aa).

Residues 9–30 (YTTQVNGGPSSLTMSPKQPNRA) are compositionally biased toward polar residues. A disordered region spans residues 9 to 35 (YTTQVNGGPSSLTMSPKQPNRATRTER). C2H2-type zinc fingers lie at residues 160 to 182 (FICS…LVKH) and 188 to 211 (YRCE…RRVH). Residues 372-397 (TSRGDGGTSECLSTEKGSGGQKKMLS) form a disordered region. Residue Lys479 forms a Glycyl lysine isopeptide (Lys-Gly) (interchain with G-Cter in SUMO2) linkage. 4 disordered regions span residues 561 to 585 (LVSS…GQVS), 599 to 622 (GEDK…ETAG), 675 to 739 (KPSS…GSRQ), and 825 to 852 (QPLT…RKED). The span at 564–574 (SDRKLEDKQME) shows a compositional bias: basic and acidic residues. Polar residues-rich tracts occupy residues 605-621 (SQQP…SETA) and 675-688 (KPSS…QRRS). Residues Lys847 and Lys861 each participate in a glycyl lysine isopeptide (Lys-Gly) (interchain with G-Cter in SUMO2) cross-link. Residues 895–914 (QVNSTKKKNKMQANPGRYFK) form a disordered region. A C2H2-type 3 zinc finger spans residues 1039-1061 (FKCWFCGRLYEDQEEWMSHGQRH).

The protein belongs to the krueppel C2H2-type zinc-finger protein family.

It is found in the nucleus. Functionally, through its association with the EHMT1-EHMT2/G9A and PRC2/EED-EZH2 histone methyltransferase complexes may function in gene silencing, regulating repressive post-translational methylation of histone tails at promoters of target genes. The protein is Zinc finger protein 518B (Znf518b) of Mus musculus (Mouse).